Consider the following 453-residue polypeptide: Serine/threonine-protein phosphatase 2A regulatory subunit B'' subunit gamma (453 aa).

2 EF-hand domains span residues 273-308 and 341-376; these read PSAL…TMTN and KEPA…IQEL. Residues aspartate 286, aspartate 288, asparagine 290, methionine 292, and glutamate 297 each coordinate Ca(2+).

In terms of assembly, interacts with MCM3AP/GANP, PPP5C, and the phosphatase 2A core enzyme composed of the PPP2CA catalytic subunit and the constant regulatory subunit PPP2R1A. Finds in a complex with ABCB1, TFPI2 and PPP2R3C; leading to the dephosphorylation of ABCB1.

The protein localises to the nucleus. It is found in the cytoplasm. In terms of biological role, may regulate MCM3AP phosphorylation through phosphatase recruitment. May act as a negative regulator of ABCB1 expression and function through the dephosphorylation of ABCB1 by TFPI2/PPP2R3C complex. May play a role in the activation-induced cell death of B-cells. In Bos taurus (Bovine), this protein is Serine/threonine-protein phosphatase 2A regulatory subunit B'' subunit gamma (PPP2R3C).